A 110-amino-acid chain; its full sequence is Large ribosomal subunit protein uL24 (110 aa).

Belongs to the universal ribosomal protein uL24 family. In terms of assembly, part of the 50S ribosomal subunit.

Its function is as follows. One of two assembly initiator proteins, it binds directly to the 5'-end of the 23S rRNA, where it nucleates assembly of the 50S subunit. In terms of biological role, one of the proteins that surrounds the polypeptide exit tunnel on the outside of the subunit. The protein is Large ribosomal subunit protein uL24 of Frankia alni (strain DSM 45986 / CECT 9034 / ACN14a).